The chain runs to 172 residues: Adenylate kinase isoenzyme 6 (172 aa).

ATP is bound by residues G13, G15, K16, T17, and T18. Residues 33 to 56 are NMPbind; the sequence is NVGDLAREGELYDGFDEEYNCPIL. The LID stretch occupies residues 108 to 118; sequence TRGYSEKKLND. ATP contacts are provided by R109 and K148.

It belongs to the adenylate kinase family. AK6 subfamily. Monomer and homodimer. Interacts with small ribosomal subunit protein uS11. Not a structural component of 43S pre-ribosomes, but transiently interacts with them by binding to uS11. Interacts with COIL (via C-terminus).

The protein localises to the cytoplasm. It is found in the nucleus. It localises to the nucleoplasm. Its subcellular location is the cajal body. The catalysed reaction is AMP + ATP = 2 ADP. The enzyme catalyses ATP + H2O = ADP + phosphate + H(+). Functionally, broad-specificity nucleoside monophosphate (NMP) kinase that catalyzes the reversible transfer of the terminal phosphate group between nucleoside triphosphates and monophosphates. Also has ATPase activity. Involved in the late cytoplasmic maturation steps of the 40S ribosomal particles, specifically 18S rRNA maturation. While NMP activity is not required for ribosome maturation, ATPase activity is. Associates transiently with small ribosomal subunit protein uS11. ATP hydrolysis breaks the interaction with uS11. May temporarily remove uS11 from the ribosome to enable a conformational change of the ribosomal RNA that is needed for the final maturation step of the small ribosomal subunit. Its NMP activity may have a role in nuclear energy homeostasis. May be involved in regulation of Cajal body (CB) formation. This is Adenylate kinase isoenzyme 6 from Oryctolagus cuniculus (Rabbit).